Here is a 241-residue protein sequence, read N- to C-terminus: Putative inactive serine protease 58 (241 aa).

Residues 1 to 17 (MKLAFLCILSTLLRTFA) form the signal peptide. The 222-residue stretch at 18–239 (YNPDHIAGTT…YLPWIEDTMK (222 aa)) folds into the Peptidase S1 domain. A disulfide bridge links Cys-41 with Cys-57. Residues His-56 and Asp-101 each act as charge relay system in the active site. 3 disulfides stabilise this stretch: Cys-133–Cys-201, Cys-165–Cys-180, and Cys-191–Cys-215. N-linked (GlcNAc...) asparagine glycosylation occurs at Asn-156.

This sequence belongs to the peptidase S1 family.

It is found in the secreted. The enzyme catalyses Preferential cleavage: Arg-|-Xaa, Lys-|-Xaa.. The protein is Putative inactive serine protease 58 (Prss58) of Mus musculus (Mouse).